A 305-amino-acid chain; its full sequence is Ribosomal RNA large subunit methyltransferase F (305 aa).

It belongs to the methyltransferase superfamily. METTL16/RlmF family.

The protein resides in the cytoplasm. It catalyses the reaction adenosine(1618) in 23S rRNA + S-adenosyl-L-methionine = N(6)-methyladenosine(1618) in 23S rRNA + S-adenosyl-L-homocysteine + H(+). In terms of biological role, specifically methylates the adenine in position 1618 of 23S rRNA. The sequence is that of Ribosomal RNA large subunit methyltransferase F from Bacteroides fragilis (strain YCH46).